The following is a 212-amino-acid chain: Stromal cell-derived factor 2-like protein (212 aa).

Residues 1–19 (MKSLFLILILCITIPLIFA) form the signal peptide. Asn20 carries N-linked (GlcNAc...) asparagine glycosylation. MIR domains follow at residues 29–86 (ITKV…IKGP), 94–149 (GTVV…VETE), and 151–206 (GKEW…TEEG).

The protein localises to the secreted. The protein is Stromal cell-derived factor 2-like protein of Dictyostelium discoideum (Social amoeba).